The following is a 334-amino-acid chain: MKKNQFLKESDVTAESVFFMTRRQVLKALGISAAALSLPHAAHADLLSWFKGNDRPPAPAGKPLEFSKPAAWQNDLPLTPADKVSGYNNFYEFGLDKADPAANAGSLKTDPWTLKISGEVAKPLTLDHDDLTRRFPLEERIYRMRCVEAWSMVVPWIGFPLHKLLALAEPTSNAKYVAFETIYAPEQMPGQQDRFIGGGLKYPYVEGLRLDEAMHPLTLMTVGVYGKALPPQNGAPVRLIVPWKYGFKGIKSIVSIKLTRERPPTTWNLAAPDEYGFYANVNPHVDHPRWSQATERFIGSGGILDVQRQPTLLFNGYAEQVASLYRGLDLRENF.

Positions 1 to 44 (MKKNQFLKESDVTAESVFFMTRRQVLKALGISAAALSLPHAAHA) form a signal peptide, tat-type signal. Mo-molybdopterin is bound by residues asparagine 88, 91–92 (YE), cysteine 146, threonine 181, asparagine 233, arginine 238, and 249–251 (GIK).

Belongs to the MsrP family. As to quaternary structure, heterodimer of a catalytic subunit (MsrP) and a heme-binding subunit (MsrQ). The cofactor is Mo-molybdopterin. Predicted to be exported by the Tat system. The position of the signal peptide cleavage has not been experimentally proven.

The protein localises to the periplasm. It carries out the reaction L-methionyl-[protein] + a quinone + H2O = L-methionyl-(S)-S-oxide-[protein] + a quinol. The enzyme catalyses L-methionyl-[protein] + a quinone + H2O = L-methionyl-(R)-S-oxide-[protein] + a quinol. Its function is as follows. Part of the MsrPQ system that repairs oxidized periplasmic proteins containing methionine sulfoxide residues (Met-O), using respiratory chain electrons. Thus protects these proteins from oxidative-stress damage caused by reactive species of oxygen and chlorine generated by the host defense mechanisms. MsrPQ is essential for the maintenance of envelope integrity under bleach stress, rescuing a wide series of structurally unrelated periplasmic proteins from methionine oxidation, including the primary periplasmic chaperone SurA and the lipoprotein Pal. The catalytic subunit MsrP is non-stereospecific, being able to reduce both (R-) and (S-) diastereoisomers of methionine sulfoxide. This is Protein-methionine-sulfoxide reductase catalytic subunit MsrP from Escherichia coli (strain 55989 / EAEC).